An 872-amino-acid polypeptide reads, in one-letter code: Homeobox-leucine zipper protein ROC6 (872 aa).

Disordered stretches follow at residues 28–53 (VHNS…GLSL) and 67–130 (NRSL…HRHT). Residues 74–85 (GNGGSGSGGDGD) show a composition bias toward gly residues. Residues 86–99 (SLGRGREEENDSRS) show a composition bias toward basic and acidic residues. A compositionally biased stretch (basic residues) spans 119–130 (PRKKKKRYHRHT). The homeobox DNA-binding region spans 122 to 181 (KKKRYHRHTPQQIQELEAVFKECPHPDEKQRMELSRRLNLESRQVKFWFQNRRTQMKQTQ). A coiled-coil region spans residues 176-248 (QMKQTQIERH…LKDELDRVCA (73 aa)). Positions 340–583 (GAIDRAVLLE…LQRQCQYLAI (244 aa)) constitute an START domain. The interval 792–818 (HNNGASPSPAEVGSGASPNSAAGGGGG) is disordered.

Belongs to the HD-ZIP homeobox family. Class IV subfamily.

The protein localises to the nucleus. Probable transcription factor. The polypeptide is Homeobox-leucine zipper protein ROC6 (ROC6) (Oryza sativa subsp. japonica (Rice)).